Here is a 2213-residue protein sequence, read N- to C-terminus: Sortilin-related receptor (2213 aa).

An N-terminal signal peptide occupies residues 1–28; that stretch reads MATRSSRRESRLPFLFTLVALLPPGALC. Positions 29–81 are cleaved as a propeptide — removed in mature form; sequence EVWTRTLHGGRAPLPQERGFRVVQGDPRELRLWERGDARGASRADEKPLRRRR. The Cell attachment site motif lies at 63 to 65; that stretch reads RGD. The Lumenal portion of the chain corresponds to 82 to 2136; sequence SAALQPEPIK…MQAARSTDVA (2055 aa). The N-linked (GlcNAc...) asparagine glycan is linked to asparagine 99. Phosphoserine is present on serine 114. The BNR 1 repeat unit spans residues 136–147; sequence YVSYDYGKSFNK. Asparagine 158 carries an N-linked (GlcNAc...) asparagine glycan. The BNR 2 repeat unit spans residues 232–243; that stretch reads WKSDDFGQTWIM. Residues asparagine 368 and asparagine 430 are each glycosylated (N-linked (GlcNAc...) asparagine). BNR repeat units follow at residues 441-452, 521-532, and 562-573; these read VITFDKGGTWEF, YISSSAGARWRE, and KYSTNEGETWKA. 4 N-linked (GlcNAc...) asparagine glycosylation sites follow: asparagine 616, asparagine 674, asparagine 817, and asparagine 870. 5 LDL-receptor class B repeats span residues 799–842, 843–886, 887–929, 930–971, and 972–1012; these read NCLY…EPLS, QLLY…VPQE, GIMF…SVDD, QWIY…FKNE, and IYWD…FYKG. An EGF-like domain is found at 1025-1071; the sequence is CSLLCLPRANNSKSCRCPDGVASSVLPSGDLMCDCPKGYELKNNTCV. N-linked (GlcNAc...) asparagine glycosylation is found at asparagine 1034 and asparagine 1067. 9 consecutive LDL-receptor class A domains span residues 1075-1113, 1114-1154, 1155-1193, 1196-1235, 1237-1271, 1272-1316, 1322-1360, 1365-1404, and 1416-1454; these read DTCLRNQYRCSNGNCINSIWWCDFDNDCGDMSDEKNCPT, TICD…HCEM, HQCRSDEYNCSSGMCIRSSWVCDGDNDCRDWSDEANCTA, HTCEASNFQCRNGHCIPQRWACDGDADCQDGSDEDPANCE, KCNGFRCPNGTCIPSTKHCDGLHDCSDGSDEQHCE, PLCT…GCSR, KVCDEFGFQCQNGVCISLIWKCDGMDDCGDYSDEANCEN, PNCSRYFQFRCDNGHCIPNRWKCDRENDCGDWSDEKDCGD, and STCLPNYYRCGGGACVIDTWVCDGYRDCADGSDEEACPS. 21 disulfides stabilise this stretch: cysteine 1077–cysteine 1089, cysteine 1084–cysteine 1102, cysteine 1096–cysteine 1111, cysteine 1116–cysteine 1130, cysteine 1124–cysteine 1143, cysteine 1137–cysteine 1152, cysteine 1157–cysteine 1169, cysteine 1164–cysteine 1182, cysteine 1176–cysteine 1191, cysteine 1198–cysteine 1210, cysteine 1205–cysteine 1223, cysteine 1217–cysteine 1234, cysteine 1238–cysteine 1248, cysteine 1243–cysteine 1261, cysteine 1255–cysteine 1270, cysteine 1274–cysteine 1288, cysteine 1282–cysteine 1301, cysteine 1295–cysteine 1314, cysteine 1324–cysteine 1336, cysteine 1331–cysteine 1349, and cysteine 1343–cysteine 1358. N-linked (GlcNAc...) asparagine glycosylation is present at asparagine 1163. Asparagine 1190 is a glycosylation site (N-linked (GlcNAc...) asparagine). Asparagine 1245 carries an N-linked (GlcNAc...) asparagine glycan. Asparagine 1366 carries an N-linked (GlcNAc...) asparagine glycan. Intrachain disulfides connect cysteine 1367-cysteine 1380, cysteine 1375-cysteine 1393, cysteine 1387-cysteine 1402, cysteine 1418-cysteine 1430, cysteine 1425-cysteine 1443, and cysteine 1437-cysteine 1452. The N-linked (GlcNAc...) asparagine glycan is linked to asparagine 1457. LDL-receptor class A domains are found at residues 1468–1507 and 1511–1550; these read GRCDRFEFECHQPKKCIPNWRRCDGHQDCQDGQDEANCPT and LTCMSWEFKCEDGEACIVLSERCDGFLDCSDESDEKACSD. Disulfide bonds link cysteine 1470/cysteine 1483, cysteine 1477/cysteine 1496, cysteine 1490/cysteine 1505, cysteine 1513/cysteine 1526, cysteine 1520/cysteine 1539, and cysteine 1533/cysteine 1548. Fibronectin type-III domains are found at residues 1556–1648, 1652–1744, 1748–1843, 1842–1926, 1933–2028, and 2029–2117; these read KVQN…TPEG, APQN…TVKG, PPPN…VRPP, PPAP…VVKM, PPRH…APDA, and LKII…LYDE. N-linked (GlcNAc...) asparagine glycosylation is found at asparagine 1569, asparagine 1607, asparagine 1705, asparagine 1732, asparagine 1808, asparagine 1853, asparagine 1893, asparagine 1985, asparagine 2009, asparagine 2053, asparagine 2068, asparagine 2075, and asparagine 2091. The chain crosses the membrane as a helical span at residues 2137–2157; it reads AVVVPILFLILLSLGVGFAIL. At 2158 to 2213 the chain is on the cytoplasmic side; that stretch reads YTKHRRLQSSFTAFANSHYSSRLGSAIFSSGDDLGEDDEDAPMITGFSDDVPMVIA. The short motif at 2160-2163 is the Potential nuclear localization signal for the C-terminal fragment generated by PSEN1 element; it reads KHRR. Residues 2171 to 2176 carry the Endocytosis signal motif; that stretch reads FANSHY. The interval 2189–2213 is required for efficient Golgi apparatus - endosome sorting; sequence DDLGEDDEDAPMITGFSDDVPMVIA. The segment at 2200–2213 is required for interaction with GGA1 and GGA2; that stretch reads MITGFSDDVPMVIA. The residue at position 2205 (serine 2205) is a Phosphoserine; by ROCK2. Residues 2207-2211 carry the DXXLL motif involved in the interaction with GGA1 motif; that stretch reads DVPMV.

Belongs to the VPS10-related sortilin family. SORL1 subfamily. As to quaternary structure, after maturation cleavage, interacts (via N-terminus) with its own propeptide; this interaction prevents interaction with other ligands, including CRLF1, GDNF, GFRA1, IL6 and IL6R. Interacts (via N-terminal ectodomain) with APP, forming a 1:1 stoichiometric complex; this interaction retains APP in the trans-Golgi network and reduces processing into soluble APP-alpha and amyloid-beta peptides. Also interacts with APP C-terminal fragment C99 and with Abeta40. Interacts with beta-secretase BACE1/BACE; this interaction may affect BACE1-binding to APP and hence reduce BACE1-dependent APP cleavage. Interacts with LRPAP1/RAP. Interacts (via C-terminal cytosolic domain) with GGA1 and GGA2 (via N-terminal VHS domain). Interacts with PACS1. May interact (via the N-terminal ectodomain) with the morphogenetic neuropeptide, also called head activator or HA; this interaction is impaired in the presence of propeptide. Interacts with neurotensin/NTS. Interacts (via the N-terminal ectodomain) with PDGFB homodimer. Interacts (via N-terminal ectodomain) with the uPA receptor PLAUR. Interacts with uPA/PLAU and PAI1/SERPINE1, either individually or in complex with each other, leading to endocytosis. Also interacts with PAI1/SERPINE1 in complex with tPA/PLAT. Interacts (via C-terminus) with AP-1 and AP-2 complexes. Interacts with BMPR1A and BMPR1B. Interacts with lipoprotein lipase LPL; this interaction is optimal in slightly acidic conditions. Interacts (via N-terminal ectodomain) with GDNF (via propeptide) and GDNF receptor alpha-1/GFRA1, either individually or in complex with each other. The interaction with GDNF occurs mostly intracellularly. Also interacts with other GDNF receptor alpha family members, including GFRA2, GFRA3 and GFRA4. Interacts with the insulin receptor INSR; this interaction strongly increases the surface exposure of INSR. Interacts (via cytosolic C-terminus) with STK39/SPAK. Interacts (via N-terminal ectodomain) with the heterodimeric complex CRLF1-CLC; within this complex, the interaction is mediated predominantly by the CRLF1 moiety. Interacts with CNTFR, as well as with the tripartite signaling complex formed by CRLF1, CLC and CNTFR. Interacts (via N-terminal ectodomain) with IL6; this interaction leads to IL6 internalization and lysosomal degradation. Binding of SOLRL1 secreted N-terminal ectodomain to IL6 may increase IL6 trans signaling. Interacts with secreted IL6R; this interaction leads to IL6R internalization. Also interacts with transmembrane IL6R; this interaction does not affect subcellular location. Interacts with APOE. Interacts with apolipoprotein E-rich beta-VLDL. Interacts with APOA5; this interaction leads to APOA5 internalization and is abolished by heparin. Interaction with APOA5 results in enhanced binding to chylomicrons. Interacts with ROCK2. Interacts (via cytosolic C-terminus) with PPP3CB/calcineurin A beta. Interacts with NTRK2/TRKB; this interaction facilitates NTRK2 trafficking between synaptic plasma membranes, postsynaptic densities and cell soma, hence positively regulates BDNF signaling. Interacts (via cytosolic C-terminus) with HSPA12A in an ADP-dependent manner; this interaction affects SORL1 internalization and subcellular localization. Interacts (via N-terminal ectodomain) with ERBB2/HER2. In terms of processing, within the Golgi apparatus, the propeptide may be cleaved off by FURIN or a furin-like protease. After cleavage, the propeptide interacts with the mature protein N-terminus, preventing the association with other ligands. At the cell surface, partially subjected to proteolytic shedding that releases the ectodomain in the extracellular milieu. The shedding may be catalyzed by ADAM17/TACE. Following shedding, PSEN1/presenilin-1 cleaves the remaining transmembrane fragment and catalyzes the release of a C-terminal fragment in the cytosol and of a soluble N-terminal beta fragment in the extracellular milieu. The C-terminal cytosolic fragment localizes to the nucleus. Post-translationally, phosphorylation at Ser-2205 facilitates the interaction with GGA1. Expressed in brain, in particular the hippocampus, dentate gyrus, and cerebral cortex (at protein level). Also detected in liver, adrenal glands, pancreas and testis. Expressed in smooth muscle cells, predominantly during proliferation.

The protein resides in the golgi apparatus membrane. Its subcellular location is the golgi apparatus. It localises to the trans-Golgi network membrane. It is found in the endosome membrane. The protein localises to the early endosome membrane. The protein resides in the recycling endosome membrane. Its subcellular location is the endoplasmic reticulum membrane. It localises to the endosome. It is found in the multivesicular body membrane. The protein localises to the cell membrane. The protein resides in the cytoplasmic vesicle. Its subcellular location is the secretory vesicle membrane. It localises to the secreted. Its function is as follows. Sorting receptor that directs several proteins to their correct location within the cell. Along with AP-1 complex, involved Golgi apparatus - endosome sorting. Sorting receptor for APP, regulating its intracellular trafficking and processing into amyloidogenic-beta peptides. Retains APP in the trans-Golgi network, hence preventing its transit through late endosomes where amyloid beta peptides Abeta40 and Abeta42 are generated. May also sort newly produced amyloid-beta peptides to lysosomes for catabolism. Does not affect APP trafficking from the endoplasmic reticulum to Golgi compartments. Sorting receptor for the BDNF receptor NTRK2/TRKB that facilitates NTRK2 trafficking between synaptic plasma membranes, postsynaptic densities and cell soma, hence positively regulates BDNF signaling by controlling the intracellular location of its receptor. Sorting receptor for GDNF that promotes GDNF regulated, but not constitutive secretion. Sorting receptor for the GDNF-GFRA1 complex, directing it from the cell surface to endosomes. GDNF is then targeted to lysosomes and degraded, while its receptor GFRA1 recycles back to the cell membrane, resulting in a GDNF clearance pathway. The SORL1-GFRA1 complex further targets RET for endocytosis, but not for degradation, affecting GDNF-induced neurotrophic activities. Sorting receptor for ERBB2/HER2. Regulates ERBB2 subcellular distribution by promoting its recycling after internalization from endosomes back to the plasma membrane, hence stimulating phosphoinositide 3-kinase (PI3K)-dependent ERBB2 signaling. Sorting receptor for lipoprotein lipase LPL. Promotes LPL localization to endosomes and later to the lysosomes, leading to degradation of newly synthesized LPL. Potential sorting receptor for APOA5, inducing APOA5 internalization to early endosomes, then to late endosomes, wherefrom a portion is sent to lysosomes and degradation, another portion is sorted to the trans-Golgi network. Sorting receptor for the insulin receptor INSR. Promotes recycling of internalized INSR via the Golgi apparatus back to the cell surface, thereby preventing lysosomal INSR catabolism, increasing INSR cell surface expression and strengthening insulin signal reception in adipose tissue. Does not affect INSR internalization. Plays a role in renal ion homeostasis, controlling the phospho-regulation of SLC12A1/NKCC2 by STK39/SPAK kinase and PPP3CB/calcineurin A beta phosphatase, possibly through intracellular sorting of STK39 and PPP3CB. Stimulates, via the N-terminal ectodomain, the proliferation and migration of smooth muscle cells, possibly by increasing cell surface expression of the urokinase receptor uPAR/PLAUR. This may promote extracellular matrix proteolysis and hence facilitate cell migration. By acting on the migration of intimal smooth muscle cells, may accelerate intimal thickening following vascular injury. Promotes adhesion of monocytes. Stimulates proliferation and migration of monocytes/macrophages. Through its action on intimal smooth muscle cells and macrophages, may accelerate intimal thickening and macrophage foam cell formation in the process of atherosclerosis. Regulates hypoxia-enhanced adhesion of hematopoietic stem and progenitor cells to the bone marrow stromal cells via a PLAUR-mediated pathway. This function is mediated by the N-terminal ectodomain. Metabolic regulator, which functions to maintain the adequate balance between lipid storage and oxidation in response to changing environmental conditions, such as temperature and diet. The N-terminal ectodomain negatively regulates adipose tissue energy expenditure, acting through the inhibition the BMP/Smad pathway. May regulate signaling by the heterodimeric neurotrophic cytokine CLCF1-CRLF1 bound to the CNTFR receptor by promoting the endocytosis of the tripartite complex CLCF1-CRLF1-CNTFR and lysosomal degradation. May regulate IL6 signaling, decreasing cis signaling, possibly by interfering with IL6-binding to membrane-bound IL6R, while up-regulating trans signaling via soluble IL6R. The chain is Sortilin-related receptor (SORL1) from Oryctolagus cuniculus (Rabbit).